We begin with the raw amino-acid sequence, 135 residues long: Lactoylglutathione lyase (135 aa).

Positions 2 to 126 constitute a VOC domain; that stretch reads RLLHTMLRVG…DGYKIELIEE (125 aa). Ni(2+) is bound at residue His-5. Arg-9 contributes to the substrate binding site. A Ni(2+)-binding site is contributed by Glu-56. Substrate-binding residues include Asn-60 and His-74. Residues His-74 and Glu-122 each contribute to the Ni(2+) site. The active-site Proton donor/acceptor is Glu-122.

The protein belongs to the glyoxalase I family. Homodimer. It depends on Ni(2+) as a cofactor.

It carries out the reaction (R)-S-lactoylglutathione = methylglyoxal + glutathione. Its pathway is secondary metabolite metabolism; methylglyoxal degradation; (R)-lactate from methylglyoxal: step 1/2. Catalyzes the conversion of hemimercaptal, formed from methylglyoxal and glutathione, to S-lactoylglutathione. This is Lactoylglutathione lyase (gloA) from Escherichia coli O157:H7.